Consider the following 188-residue polypeptide: Der GTPase-activating protein YihI (188 aa).

Disordered regions lie at residues M1–P80 and D162–F188. Basic and acidic residues predominate over residues T27–D37. The segment covering N47 to G57 has biased composition (polar residues).

It belongs to the YihI family. Interacts with Der.

In terms of biological role, a GTPase-activating protein (GAP) that modifies Der/EngA GTPase function. May play a role in ribosome biogenesis. This chain is Der GTPase-activating protein YihI, found in Yersinia pseudotuberculosis serotype O:1b (strain IP 31758).